The following is an 81-amino-acid chain: Photosystem I iron-sulfur center (81 aa).

2 consecutive 4Fe-4S ferredoxin-type domains span residues 2-31 (SHSV…MIPW) and 39-68 (IASA…VRVY). 8 residues coordinate [4Fe-4S] cluster: C11, C14, C17, C21, C48, C51, C54, and C58.

In terms of assembly, the eukaryotic PSI reaction center is composed of at least 11 subunits. It depends on [4Fe-4S] cluster as a cofactor.

The protein resides in the plastid. It is found in the chloroplast thylakoid membrane. It carries out the reaction reduced [plastocyanin] + hnu + oxidized [2Fe-2S]-[ferredoxin] = oxidized [plastocyanin] + reduced [2Fe-2S]-[ferredoxin]. Apoprotein for the two 4Fe-4S centers FA and FB of photosystem I (PSI); essential for photochemical activity. FB is the terminal electron acceptor of PSI, donating electrons to ferredoxin. The C-terminus interacts with PsaA/B/D and helps assemble the protein into the PSI complex. Required for binding of PsaD and PsaE to PSI. PSI is a plastocyanin-ferredoxin oxidoreductase, converting photonic excitation into a charge separation, which transfers an electron from the donor P700 chlorophyll pair to the spectroscopically characterized acceptors A0, A1, FX, FA and FB in turn. This is Photosystem I iron-sulfur center from Phalaenopsis aphrodite subsp. formosana (Moth orchid).